The primary structure comprises 919 residues: MPATRRTARVRRVAAVTVTALAAALLPPLAARADTPPAPPSDAKLAKTAARHDLTREQFYFSCRTLRQRGRRERPRRLTGTRLTTGYDPTDKGFYQGGDLKGLTEKLDYIKGLGTTSIWMAPIFKNQPVQGTGKDASAGYHGYWITDFTQVDPHFGTNKDLKNLISKAHAKGMKVFFDVITNHTADVVDYEEKSYDYLSKGAFPYLTKDGQPFDDADYADGERRFPRVDSGSFPRTPTVPTAKKNLKVPSWLNDPAMYHNRGDSTWAGESATYGDFNGLDDLWTERPEVVGGMEKIYQRWVEDFAIDGFRIDTVKHVDMEFWTQWATALDAYAAKKGRDDFFMFGEVYSADTSVTAPYVTQGRLDSTLDFPFQDAARAYASQGGSARKLAAVFGDDYKYTTDKANAYEQVTFLGNHDMGRIGTFLKQDAPEAGDAELLKKDRLANELMFLSRGNPVIYYGDEQGFTGAGGDKDARQPMFASRTADYLDDDQLGTDRTHAEAAYDTSAPLYRQISALAELRKANPALADGVQTERYAADGAGIYAFSRTDAKTGTEYVVAFNNAGTEPSAAFATGSAGMTFRGLYGTDATVKSGADSKVTVTVPARSAVVLKAAGRLAAPAAEPTISLHAPDPGATGTVELSADVAGGQLNRVVFAAQTGDGKWRTLGTADHAPYKVTHTVDADTPAGTALRYKAVVVDSAGRTASGRLHHRHPARRGGAHRRLPGPRGRPLQARRRELRRLGPVRLGRPRRREAHHLARHPPLHRPGRLRAFAYVKLKPGASTVGFLVIDKDGNKDVAADRTIDVTETGEVWIEQGEEQLVTERPEYPAQDTTKAVLHYKRADGNYDGWGLHVWGDAANPTDWAKPLQPVRTDPYGAVFEVPLTDGASSLSYMVHKGDEKDLPTDQAWTSRPTATRCGC.

Residues 1 to 33 form the signal peptide; sequence MPATRRTARVRRVAAVTVTALAAALLPPLAARA. Positions 182 and 281 each coordinate Ca(2+). Asp-312 (nucleophile) is an active-site residue. His-316 is a Ca(2+) binding site. The Proton donor role is filled by Glu-346. Residues 704–729 are disordered; sequence ASGRLHHRHPARRGGAHRRLPGPRGR. Basic residues predominate over residues 707–724; that stretch reads RLHHRHPARRGGAHRRLP.

This sequence belongs to the glycosyl hydrolase 13 family. In terms of assembly, monomer. Ca(2+) is required as a cofactor.

The protein localises to the secreted. The catalysed reaction is Endohydrolysis of (1-&gt;4)-alpha-D-glucosidic linkages in polysaccharides containing three or more (1-&gt;4)-alpha-linked D-glucose units.. The polypeptide is Alpha-amylase (amy) (Streptomyces lividans).